The primary structure comprises 320 residues: Olfactory receptor 52N1 (320 aa).

The Extracellular segment spans residues 1 to 27 (MSFLNGTSLTPASFILNGIPGLEDVHL). The N-linked (GlcNAc...) asparagine glycan is linked to Asn-5. Residues 28–48 (WISFPLCTMYSIAITGNFGLM) form a helical membrane-spanning segment. The Cytoplasmic segment spans residues 49-56 (YLIYCDEA). A helical membrane pass occupies residues 57 to 77 (LHRPMYVFLALLSFTDVLMCT). Residues 78–101 (STLPNTLFILWFNLKEIDFKACLA) lie on the Extracellular side of the membrane. An intrachain disulfide couples Cys-99 to Cys-191. The chain crosses the membrane as a helical span at residues 102 to 122 (QMFFVHTFTGMESGVLMLMAL). At 123–141 (DHCVAICFPLRYATILTNS) the chain is on the cytoplasmic side. The helical transmembrane segment at 142–162 (VIAKAGFLTFLRGVMLVIPST) threads the bilayer. Over 163–198 (FLTKRLPYCKGNVIPHTYCDHMSVAKISCGNVRVNA) the chain is Extracellular. Residues 199–219 (IYGLIVALLIGGFDILCITIS) form a helical membrane-spanning segment. Topologically, residues 220–239 (YTMILQAVVSLSSADARQKA) are cytoplasmic. Residues 240–260 (FSTCTAHFCAIVLTYVPAFFT) form a helical membrane-spanning segment. The Extracellular segment spans residues 261 to 276 (FFTHHFGGHTIPLHIH). The helical transmembrane segment at 277–297 (IIMANLYLLMPPTMNPIVYGV) threads the bilayer. Over 298 to 320 (KTRQVRESVIRFFLKGKDNSHNF) the chain is Cytoplasmic.

This sequence belongs to the G-protein coupled receptor 1 family.

It is found in the cell membrane. Odorant receptor. The chain is Olfactory receptor 52N1 (OR52N1) from Homo sapiens (Human).